A 242-amino-acid polypeptide reads, in one-letter code: DNA repair protein RecO (242 aa).

This sequence belongs to the RecO family. As to quaternary structure, monomer.

Its function is as follows. Involved in DNA repair and RecF pathway recombination. In Shigella sonnei (strain Ss046), this protein is DNA repair protein RecO.